A 249-amino-acid chain; its full sequence is MADGANDGGNPGAEEQQRLLDQHKEAHFTAGEIVRDIIIGVSDGLTVPFALAAGLSGANASSSIVLTAGIAEVAAGAISMGLGGYLAAKSEADNYARELKREQEEIIRVPDTEAAEVAEILARYGIEPHEYGPVVNALRKKPQAWLDFMMKFELGLEKPDPKRALQSAFTIAIAYVLGGLVPLIPYMFIPVARKAVVASVILTLMALLIFGYAKGYFTDNKPFKSALQTALIGAIASAAAFGMAKAVQS.

Residues 1 to 36 (MADGANDGGNPGAEEQQRLLDQHKEAHFTAGEIVRD) lie on the Cytoplasmic side of the membrane. A helical transmembrane segment spans residues 37–57 (IIIGVSDGLTVPFALAAGLSG). The Vacuolar portion of the chain corresponds to 58 to 63 (ANASSS). Residues 64–84 (IVLTAGIAEVAAGAISMGLGG) form a helical membrane-spanning segment. The Cytoplasmic portion of the chain corresponds to 85-170 (YLAAKSEADN…PKRALQSAFT (86 aa)). The cytoplasmic metal binding domain (MBD) stretch occupies residues 90 to 165 (SEADNYAREL…LEKPDPKRAL (76 aa)). Fe cation-binding residues include E102, E105, E113, E116, M149, and E153. Residues 171–191 (IAIAYVLGGLVPLIPYMFIPV) traverse the membrane as a helical segment. Residues 192-194 (ARK) are Vacuolar-facing. Residues 195–215 (AVVASVILTLMALLIFGYAKG) traverse the membrane as a helical segment. The Cytoplasmic segment spans residues 216–226 (YFTDNKPFKSA). Residues 227-247 (LQTALIGAIASAAAFGMAKAV) traverse the membrane as a helical segment. Residues 248–249 (QS) are Vacuolar-facing.

The protein belongs to the CCC1 family. As to quaternary structure, homodimer. The dimeric interaction is mediated by both the transmembrane domains (TMDs) and the cytoplasmic metal binding domain (MBD).

The protein resides in the vacuole membrane. The enzyme catalyses Fe(2+)(in) = Fe(2+)(out). With respect to regulation, transport of iron ions is inhibited by zinc ions. Its function is as follows. Vacuolar iron transporter involved in the transfer of iron ions from the cytosol to the vacuole for intracellular iron storage. Can transport cobalt ions from the cytosol to the vacuole. In Eucalyptus grandis (Flooded gum), this protein is Vacuolar iron transporter 1.